Consider the following 168-residue polypeptide: Peptide deformylase (168 aa).

Fe cation contacts are provided by Cys92 and His134. Glu135 is a catalytic residue. A Fe cation-binding site is contributed by His138.

The protein belongs to the polypeptide deformylase family. The cofactor is Fe(2+).

The catalysed reaction is N-terminal N-formyl-L-methionyl-[peptide] + H2O = N-terminal L-methionyl-[peptide] + formate. In terms of biological role, removes the formyl group from the N-terminal Met of newly synthesized proteins. Requires at least a dipeptide for an efficient rate of reaction. N-terminal L-methionine is a prerequisite for activity but the enzyme has broad specificity at other positions. This chain is Peptide deformylase, found in Teredinibacter turnerae (strain ATCC 39867 / T7901).